We begin with the raw amino-acid sequence, 212 residues long: Thymidylate kinase (212 aa).

11–18 (GPEGAGKT) lines the ATP pocket.

Belongs to the thymidylate kinase family.

It carries out the reaction dTMP + ATP = dTDP + ADP. Its function is as follows. Phosphorylation of dTMP to form dTDP in both de novo and salvage pathways of dTTP synthesis. The sequence is that of Thymidylate kinase from Streptococcus pneumoniae serotype 2 (strain D39 / NCTC 7466).